The chain runs to 941 residues: Gamma-aminobutyric acid type B receptor subunit 2 (941 aa).

The N-terminal stretch at 1 to 41 (MASPRSSGQPGPPPPPPPPPARLLLLLLLPLLLPLAPGAWG) is a signal peptide. At 42-483 (WARGAPRPPP…LRKISLPLYS (442 aa)) the chain is on the extracellular side. Asparagine 90 is a glycosylation site (N-linked (GlcNAc...) asparagine). 3 cysteine pairs are disulfide-bonded: cysteine 108–cysteine 135, cysteine 237–cysteine 266, and cysteine 265–cysteine 302. Asparagine 298, asparagine 389, asparagine 404, and asparagine 453 each carry an N-linked (GlcNAc...) asparagine glycan. The chain crosses the membrane as a helical span at residues 484-504 (ILSALTILGMIMASAFLFFNI). Residues 505 to 522 (KNRNQKLIKMSSPYMNNL) lie on the Cytoplasmic side of the membrane. A helical membrane pass occupies residues 523 to 543 (IILGGMLSYASIFLFGLDGSF). Topologically, residues 544–551 (VSEKTFET) are extracellular. A helical membrane pass occupies residues 552–572 (LCTVRTWILTVGYTTAFGAMF). Residues 573-597 (AKTWRVHAIFKNVKMKKKIIKDQKL) are Cytoplasmic-facing. Residues 598 to 618 (LVIVGGMLLIDLCILICWQAV) traverse the membrane as a helical segment. Residues 619–654 (DPLRRTVEKYSMEPDPAGRDISIRPLLEHCENTHMT) lie on the Extracellular side of the membrane. A helical membrane pass occupies residues 655 to 675 (IWLGIVYAYKGLLMLFGCFLA). The Cytoplasmic portion of the chain corresponds to 676 to 691 (WETRNVSIPALNDSKY). The chain crosses the membrane as a helical span at residues 692 to 712 (IGMSVYNVGIMCIIGAAVSFL). Over 713-720 (TRDQPNVQ) the chain is Extracellular. Residues 721–741 (FCIVALVIIFCSTITLCLVFV) form a helical membrane-spanning segment. Residues 742 to 941 (PKLITLRTNP…PSFRVMVSGL (200 aa)) are Cytoplasmic-facing. Residues 763-790 (TQNQKKEDSKTSTSVTSVNQASTSRLEG) form a disordered region. A compositionally biased stretch (polar residues) spans 773–787 (TSTSVTSVNQASTSR). Residues serine 776 and serine 779 each carry the phosphoserine modification. The stretch at 781–819 (NQASTSRLEGLQSENHRLRMKITELDKDLEEVTMQLQDT) forms a coiled coil. Threonine 819 is modified (phosphothreonine). Residues serine 884, serine 893, serine 913, serine 916, serine 920, and serine 924 each carry the phosphoserine modification.

The protein belongs to the G-protein coupled receptor 3 family. GABA-B receptor subfamily. In terms of assembly, heterodimer of GABBR1 and GABBR2. Homodimers may form, but are inactive. Interacts (via C-terminus) with ATF4 (via leucine zipper domain). In terms of tissue distribution, highly expressed in brain, especially in cerebral cortex, thalamus, hippocampus, frontal, occipital and temporal lobe, occipital pole and cerebellum, followed by corpus callosum, caudate nucleus, spinal cord, amygdala and medulla. Weakly expressed in heart, testis and skeletal muscle.

It is found in the cell membrane. The protein localises to the postsynaptic cell membrane. Functionally, component of a heterodimeric G-protein coupled receptor for GABA, formed by GABBR1 and GABBR2. Within the heterodimeric GABA receptor, only GABBR1 seems to bind agonists, while GABBR2 mediates coupling to G proteins. Ligand binding causes a conformation change that triggers signaling via guanine nucleotide-binding proteins (G proteins) and modulates the activity of down-stream effectors, such as adenylate cyclase. Signaling inhibits adenylate cyclase, stimulates phospholipase A2, activates potassium channels, inactivates voltage-dependent calcium-channels and modulates inositol phospholipid hydrolysis. Plays a critical role in the fine-tuning of inhibitory synaptic transmission. Pre-synaptic GABA receptor inhibits neurotransmitter release by down-regulating high-voltage activated calcium channels, whereas postsynaptic GABA receptor decreases neuronal excitability by activating a prominent inwardly rectifying potassium (Kir) conductance that underlies the late inhibitory postsynaptic potentials. Not only implicated in synaptic inhibition but also in hippocampal long-term potentiation, slow wave sleep, muscle relaxation and antinociception. The chain is Gamma-aminobutyric acid type B receptor subunit 2 (GABBR2) from Homo sapiens (Human).